The primary structure comprises 683 residues: Protein kinase C eta type (683 aa).

The 118-residue stretch at 1-118 (MSSGTMKFNG…LRTAGTSDTF (118 aa)) folds into the C2 domain. Phosphoserine occurs at positions 28 and 32. Phorbol-ester/DAG-type zinc fingers lie at residues 171–222 (GHKF…VTAC) and 245–295 (PHKF…APNC). Phosphoserine is present on Ser-317. Positions 355–614 (FEFIRVLGKG…EHEILRHPFF (260 aa)) constitute a Protein kinase domain. ATP is bound by residues 361 to 369 (LGKGSFGKV) and Lys-384. The active-site Proton acceptor is the Asp-479. Thr-513 is subject to Phosphothreonine; by PDPK1. Residues 615–683 (KEIDWVQLNH…FSYVSPELQP (69 aa)) enclose the AGC-kinase C-terminal domain. Thr-656 bears the Phosphothreonine mark. Position 675 is a phosphoserine (Ser-675).

It belongs to the protein kinase superfamily. AGC Ser/Thr protein kinase family. PKC subfamily. As to quaternary structure, interacts with FYN. Interacts with RALA. Interacts with DGKQ.

The protein localises to the cytoplasm. It carries out the reaction L-seryl-[protein] + ATP = O-phospho-L-seryl-[protein] + ADP + H(+). The enzyme catalyses L-threonyl-[protein] + ATP = O-phospho-L-threonyl-[protein] + ADP + H(+). Novel PKCs (PRKCD, PRKCE, PRKCH and PRKCQ) are calcium-insensitive, but activated by diacylglycerol (DAG) and phosphatidylserine. Three specific sites; Thr-513 (activation loop of the kinase domain), Thr-656 (turn motif) and Ser-675 (hydrophobic region), need to be phosphorylated for its full activation. In terms of biological role, calcium-independent, phospholipid- and diacylglycerol (DAG)-dependent serine/threonine-protein kinase that is involved in the regulation of cell differentiation in keratinocytes and pre-B cell receptor, mediates regulation of epithelial tight junction integrity and foam cell formation, and is required for glioblastoma proliferation and apoptosis prevention in MCF-7 cells. In keratinocytes, binds and activates the tyrosine kinase FYN, which in turn blocks epidermal growth factor receptor (EGFR) signaling and leads to keratinocyte growth arrest and differentiation. Associates with the cyclin CCNE1-CDK2-CDKN1B complex and inhibits CDK2 kinase activity, leading to RB1 dephosphorylation and thereby G1 arrest in keratinocytes. In association with RALA activates actin depolymerization, which is necessary for keratinocyte differentiation. In the pre-B cell receptor signaling, functions downstream of BLNK by up-regulating IRF4, which in turn activates L chain gene rearrangement. Regulates epithelial tight junctions (TJs) by phosphorylating occludin (OCLN) on threonine residues, which is necessary for the assembly and maintenance of TJs. In association with PLD2 and via TLR4 signaling, is involved in lipopolysaccharide (LPS)-induced RGS2 down-regulation and foam cell formation. Upon PMA stimulation, mediates glioblastoma cell proliferation by activating the mTOR pathway, the PI3K/AKT pathway and the ERK1-dependent phosphorylation of ELK1. Involved in the protection of glioblastoma cells from irradiation-induced apoptosis by preventing caspase-9 activation. In camptothecin-treated MCF-7 cells, regulates NF-kappa-B upstream signaling by activating IKBKB, and confers protection against DNA damage-induced apoptosis. Promotes oncogenic functions of ATF2 in the nucleus while blocking its apoptotic function at mitochondria. Phosphorylates ATF2 which promotes its nuclear retention and transcriptional activity and negatively regulates its mitochondrial localization. This is Protein kinase C eta type (Prkch) from Rattus norvegicus (Rat).